The following is a 526-amino-acid chain: Cytochrome P450 4e2 (526 aa).

Heme is bound by residues E307 and C444.

The protein belongs to the cytochrome P450 family. The cofactor is heme.

The protein resides in the endoplasmic reticulum membrane. It localises to the microsome membrane. Its function is as follows. May be involved in the metabolism of insect hormones and in the breakdown of synthetic insecticides. This is Cytochrome P450 4e2 (Cyp4e2) from Drosophila melanogaster (Fruit fly).